Reading from the N-terminus, the 343-residue chain is Thromboxane A2 receptor (343 aa).

Over 1-29 (MWPNGSSLGPCFRPTNITLEERRLIASPW) the chain is Extracellular. 2 N-linked (GlcNAc...) asparagine glycosylation sites follow: Asn-4 and Asn-16. Residues 30–52 (FAASFCVVGLASNLLALSVLAGA) traverse the membrane as a helical segment. Over 53 to 66 (RQGGSHTRSSFLTF) the chain is Cytoplasmic. Residues 67 to 87 (LCGLVLTDFLGLLVTGAIVVS) traverse the membrane as a helical segment. Residues 88–106 (QHAALFEWHAVDPGCRLCR) lie on the Extracellular side of the membrane. Cys-105 and Cys-183 are oxidised to a cystine. The helical transmembrane segment at 107-128 (FMGVVMIFFGLSPLLLGATMAS) threads the bilayer. Over 129–149 (ERFLGITRPFSRPVVTSQRRA) the chain is Cytoplasmic. A helical transmembrane segment spans residues 150–172 (WATVGLVWAAALALGLLPLLGLG). The Extracellular segment spans residues 173 to 193 (RYTVQYPGSWCFLTLGAESGD). Residues 194 to 219 (VAFGLLFSMLGGLSVGLSFLLNTVSV) traverse the membrane as a helical segment. Over 220–246 (ATLCHVYHGQEAAQQRPRDSEVEMMAQ) the chain is Cytoplasmic. Residues 247 to 270 (LLGIMLVASVCWLPLLVFIAQTVL) form a helical membrane-spanning segment. Over 271–289 (RNPPAMSPSGQLSRATEQE) the chain is Extracellular. The helical transmembrane segment at 290–311 (LLIYLRVATWNQILDPWVYILF) threads the bilayer. Residues 312 to 343 (RRAVLRRLQPRLSTRPRSLSLQPQLTQRSGLQ) lie on the Cytoplasmic side of the membrane. 2 positions are modified to phosphoserine: Ser-329 and Ser-331.

It belongs to the G-protein coupled receptor 1 family. Interacts with RPGRIP1L. Interacts with RACK1; the interaction regulates TBXA2R cell surface expression.

The protein resides in the cell membrane. Receptor for thromboxane A2 (TXA2), a potent stimulator of platelet aggregation. The activity of this receptor is mediated by a G-protein that activates a phosphatidylinositol-calcium second messenger system. In the kidney, the binding of TXA2 to glomerular TP receptors causes intense vasoconstriction. Activates phospholipase C and adenylyl cyclase. The sequence is that of Thromboxane A2 receptor (TBXA2R) from Chlorocebus aethiops (Green monkey).